The primary structure comprises 267 residues: 4-hydroxy-tetrahydrodipicolinate reductase (267 aa).

11 to 16 (GAAGRM) is a binding site for NAD(+). Arginine 39 contacts NADP(+). Residues 100 to 102 (GTT) and 126 to 129 (APNF) each bind NAD(+). Residue histidine 156 is the Proton donor/acceptor of the active site. Histidine 157 contributes to the (S)-2,3,4,5-tetrahydrodipicolinate binding site. Lysine 160 (proton donor) is an active-site residue. 166–167 (GT) contacts (S)-2,3,4,5-tetrahydrodipicolinate.

Belongs to the DapB family.

The protein localises to the cytoplasm. The catalysed reaction is (S)-2,3,4,5-tetrahydrodipicolinate + NAD(+) + H2O = (2S,4S)-4-hydroxy-2,3,4,5-tetrahydrodipicolinate + NADH + H(+). The enzyme catalyses (S)-2,3,4,5-tetrahydrodipicolinate + NADP(+) + H2O = (2S,4S)-4-hydroxy-2,3,4,5-tetrahydrodipicolinate + NADPH + H(+). It participates in amino-acid biosynthesis; L-lysine biosynthesis via DAP pathway; (S)-tetrahydrodipicolinate from L-aspartate: step 4/4. Functionally, catalyzes the conversion of 4-hydroxy-tetrahydrodipicolinate (HTPA) to tetrahydrodipicolinate. In Moorella thermoacetica (strain ATCC 39073 / JCM 9320), this protein is 4-hydroxy-tetrahydrodipicolinate reductase.